Reading from the N-terminus, the 249-residue chain is MQREEKQLDMLLEAVLNRLNDLKHSIGVMIHRLETEYETINWPTFLDNFALISSHLTGLMKILSTEIGTPLRNLTVLPLMLTPERDEALLQLTEGRVPIFSHDLAPDYLRTKPDPGAESRQAAHEAKANNLTVEASMKQVAQYNKVISHVWDIISKAKEDWENESSTRPGIQQTSSMADTQALVAAVGLGNGLTAPVGPPTGAGVMIPPAIRQGSPMSAVSPSGNAPMGKMPSGIKTNIKSANQVHPYR.

The stretch at 1 to 26 (MQREEKQLDMLLEAVLNRLNDLKHSI) forms a coiled coil. 2 stretches are compositionally biased toward polar residues: residues 215-224 (SPMSAVSPSG) and 235-249 (IKTNIKSANQVHPYR). Residues 215–249 (SPMSAVSPSGNAPMGKMPSGIKTNIKSANQVHPYR) form a disordered region.

The protein belongs to the Mediator complex subunit 8 family. As to quaternary structure, component of the Mediator complex.

It is found in the nucleus. In terms of biological role, component of the Mediator complex, a coactivator involved in the regulated transcription of nearly all RNA polymerase II-dependent genes. Mediator functions as a bridge to convey information from gene-specific regulatory proteins to the basal RNA polymerase II transcription machinery. Mediator is recruited to promoters by direct interactions with regulatory proteins and serves as a scaffold for the assembly of a functional preinitiation complex with RNA polymerase II and the general transcription factors. In Anopheles gambiae (African malaria mosquito), this protein is Mediator of RNA polymerase II transcription subunit 8 (MED8).